A 315-amino-acid polypeptide reads, in one-letter code: MLEIEKPKIECVEMDPEGTYGKFVVDPLERGYGITLGNSLRRVLLASLPGAAVTAVKIDGVLHEFSSIPGVREDVTELILNLKSLRLKLYGEEDRLMRIEAEGEGRITAGDIITSPDVEILNPDLHIATLEPDARLYMELTVGRGRGYVPAEKNKRGNHVIGVIPVDSIFTPVTKVNFTVDKTRVGHDTDFDKLTMEVWTDGSLRPDEALSLAARITTEHLRLFVGLTESVNNVEIMVTKEEEKKNKLLEMPIEELDLSVRSYNCLKRAGINTVEELIQRNEEEMMKVRNLGKKSLEEVVRKLGELGLDLRHDEE.

Residues 1 to 228 (MLEIEKPKIE…EHLRLFVGLT (228 aa)) are alpha N-terminal domain (alpha-NTD). The segment at 245–315 (KNKLLEMPIE…LGLDLRHDEE (71 aa)) is alpha C-terminal domain (alpha-CTD).

This sequence belongs to the RNA polymerase alpha chain family. As to quaternary structure, homodimer. The RNAP catalytic core consists of 2 alpha, 1 beta, 1 beta' and 1 omega subunit. When a sigma factor is associated with the core the holoenzyme is formed, which can initiate transcription.

It catalyses the reaction RNA(n) + a ribonucleoside 5'-triphosphate = RNA(n+1) + diphosphate. Functionally, DNA-dependent RNA polymerase catalyzes the transcription of DNA into RNA using the four ribonucleoside triphosphates as substrates. In Desulforudis audaxviator (strain MP104C), this protein is DNA-directed RNA polymerase subunit alpha.